A 648-amino-acid polypeptide reads, in one-letter code: Chaperone protein HtpG (648 aa).

The interval methionine 1–arginine 353 is a; substrate-binding. A b region spans residues glutamate 354–arginine 567. The tract at residues isoleucine 568–leucine 648 is c.

This sequence belongs to the heat shock protein 90 family. Homodimer.

It localises to the cytoplasm. Molecular chaperone. Has ATPase activity. The sequence is that of Chaperone protein HtpG from Mycobacterium ulcerans (strain Agy99).